The sequence spans 88 residues: HssA/B-like protein 6 (88 aa).

The segment at 1-22 is disordered; sequence MSILSALTSISNPMKSSNSNVA.

The protein belongs to the hssA/B family.

This Dictyostelium discoideum (Social amoeba) protein is HssA/B-like protein 6 (hssl6).